A 252-amino-acid chain; its full sequence is Type III pantothenate kinase (252 aa).

Position 6-13 (6-13 (DIGNTSTA)) interacts with ATP. A substrate-binding site is contributed by 104–107 (GADR). Residue aspartate 106 is the Proton acceptor of the active site. Aspartate 128 lines the K(+) pocket. Threonine 131 contributes to the ATP binding site. Threonine 183 contacts substrate.

The protein belongs to the type III pantothenate kinase family. Homodimer. NH4(+) is required as a cofactor. It depends on K(+) as a cofactor.

It localises to the cytoplasm. It catalyses the reaction (R)-pantothenate + ATP = (R)-4'-phosphopantothenate + ADP + H(+). Its pathway is cofactor biosynthesis; coenzyme A biosynthesis; CoA from (R)-pantothenate: step 1/5. Catalyzes the phosphorylation of pantothenate (Pan), the first step in CoA biosynthesis. The sequence is that of Type III pantothenate kinase from Thermus thermophilus (strain ATCC 27634 / DSM 579 / HB8).